A 152-amino-acid chain; its full sequence is MTEYKKVIAQNKKALFNYFIAERLEAGIVLKGSEVRSLRQGKASIEESHAADTGHEVFLYNCHIAEYEKANRFNHATRRPRKLLLHTKEIKKIIGRIRIKGYTLVALSMYFNKKNKVKVELGIAKGKKLHDKRESIKEKDWKRDQSRLIRQK.

The protein belongs to the SmpB family.

The protein localises to the cytoplasm. Its function is as follows. Required for rescue of stalled ribosomes mediated by trans-translation. Binds to transfer-messenger RNA (tmRNA), required for stable association of tmRNA with ribosomes. tmRNA and SmpB together mimic tRNA shape, replacing the anticodon stem-loop with SmpB. tmRNA is encoded by the ssrA gene; the 2 termini fold to resemble tRNA(Ala) and it encodes a 'tag peptide', a short internal open reading frame. During trans-translation Ala-aminoacylated tmRNA acts like a tRNA, entering the A-site of stalled ribosomes, displacing the stalled mRNA. The ribosome then switches to translate the ORF on the tmRNA; the nascent peptide is terminated with the 'tag peptide' encoded by the tmRNA and targeted for degradation. The ribosome is freed to recommence translation, which seems to be the essential function of trans-translation. This Rickettsia africae (strain ESF-5) protein is SsrA-binding protein.